The following is a 551-amino-acid chain: Adenylyl cyclase-associated protein (551 aa).

Positions 34 to 55 (SGHKPLPNMHRPSRDSNSQTHN) are disordered. Ser-92 bears the Phosphoserine mark. A Phosphothreonine modification is found at Thr-96. Positions 288 to 300 (SASKTQAPSSGDS) are enriched in polar residues. Disordered regions lie at residues 288–333 (SASK…NKGD) and 348–395 (TSGL…PVKP). Over residues 305–315 (LPPPPPPPPPS) the composition is skewed to pro residues. Over residues 352 to 361 (RKVDKSEMTH) the composition is skewed to basic and acidic residues. The C-CAP/cofactor C-like domain occupies 395–529 (PPRIELENTK…EEGDYAERAV (135 aa)).

This sequence belongs to the CAP family.

Functionally, the N-terminal domain binds to adenylyl cyclase, thereby enabling adenylyl cyclase to be activated by upstream regulatory signals, such as Ras. The C-terminal domain is required for normal cellular morphology and growth control. The protein is Adenylyl cyclase-associated protein (cap1) of Schizosaccharomyces pombe (strain 972 / ATCC 24843) (Fission yeast).